A 448-amino-acid polypeptide reads, in one-letter code: Glutamyl-tRNA reductase (448 aa).

Substrate is bound by residues 49–52 (TCNR), serine 109, 114–116 (ETQ), and glutamine 120. Cysteine 50 acts as the Nucleophile in catalysis. 189-194 (GAGETG) serves as a coordination point for NADP(+). The tract at residues 427 to 448 (PVDEVEETDATSAKAPLRALMR) is disordered.

It belongs to the glutamyl-tRNA reductase family. In terms of assembly, homodimer.

The enzyme catalyses (S)-4-amino-5-oxopentanoate + tRNA(Glu) + NADP(+) = L-glutamyl-tRNA(Glu) + NADPH + H(+). It functions in the pathway porphyrin-containing compound metabolism; protoporphyrin-IX biosynthesis; 5-aminolevulinate from L-glutamyl-tRNA(Glu): step 1/2. Functionally, catalyzes the NADPH-dependent reduction of glutamyl-tRNA(Glu) to glutamate 1-semialdehyde (GSA). In Exiguobacterium sp. (strain ATCC BAA-1283 / AT1b), this protein is Glutamyl-tRNA reductase.